The following is a 443-amino-acid chain: ATP-dependent protease ATPase subunit HslU (443 aa).

ATP-binding positions include I18, 60-65, D256, E321, and R393; that span reads GVGKTE.

Belongs to the ClpX chaperone family. HslU subfamily. In terms of assembly, a double ring-shaped homohexamer of HslV is capped on each side by a ring-shaped HslU homohexamer. The assembly of the HslU/HslV complex is dependent on binding of ATP.

It is found in the cytoplasm. ATPase subunit of a proteasome-like degradation complex; this subunit has chaperone activity. The binding of ATP and its subsequent hydrolysis by HslU are essential for unfolding of protein substrates subsequently hydrolyzed by HslV. HslU recognizes the N-terminal part of its protein substrates and unfolds these before they are guided to HslV for hydrolysis. This is ATP-dependent protease ATPase subunit HslU from Enterobacter sp. (strain 638).